A 360-amino-acid chain; its full sequence is Phosphoserine aminotransferase (360 aa).

Arginine 41 is an L-glutamate binding site. Residues tryptophan 101, threonine 152, aspartate 172, and glutamine 195 each coordinate pyridoxal 5'-phosphate. An N6-(pyridoxal phosphate)lysine modification is found at lysine 196. Pyridoxal 5'-phosphate is bound at residue asparagine 237 to threonine 238.

It belongs to the class-V pyridoxal-phosphate-dependent aminotransferase family. SerC subfamily. As to quaternary structure, homodimer. The cofactor is pyridoxal 5'-phosphate.

The protein resides in the cytoplasm. It carries out the reaction O-phospho-L-serine + 2-oxoglutarate = 3-phosphooxypyruvate + L-glutamate. The enzyme catalyses 4-(phosphooxy)-L-threonine + 2-oxoglutarate = (R)-3-hydroxy-2-oxo-4-phosphooxybutanoate + L-glutamate. The protein operates within amino-acid biosynthesis; L-serine biosynthesis; L-serine from 3-phospho-D-glycerate: step 2/3. Its pathway is cofactor biosynthesis; pyridoxine 5'-phosphate biosynthesis; pyridoxine 5'-phosphate from D-erythrose 4-phosphate: step 3/5. In terms of biological role, catalyzes the reversible conversion of 3-phosphohydroxypyruvate to phosphoserine and of 3-hydroxy-2-oxo-4-phosphonooxybutanoate to phosphohydroxythreonine. This chain is Phosphoserine aminotransferase, found in Paraburkholderia phytofirmans (strain DSM 17436 / LMG 22146 / PsJN) (Burkholderia phytofirmans).